The primary structure comprises 225 residues: Membrane protein (225 aa).

Topologically, residues 1–20 are virion surface; sequence MPNETNCTLDFEQSVQLFKE. Residues 21-41 form a helical membrane-spanning segment; the sequence is YNLFITAFLLFLTIILQYGYA. Topologically, residues 42 to 51 are intravirion; sequence TRSKVIYTLK. A helical membrane pass occupies residues 52 to 72; sequence MIVLWCFWPLNIAVGVISCTY. Residues 73–77 are Virion surface-facing; the sequence is PPNTG. A helical membrane pass occupies residues 78–98; that stretch reads GLVAAIILTVFACLSFVGYWI. The Intravirion portion of the chain corresponds to 99 to 225; the sequence is QSIRLFKRCR…VATGGSSLYT (127 aa).

This sequence belongs to the gammacoronaviruses M protein family. Homomultimer. Interacts with envelope E protein in the budding compartment of the host cell, which is located between endoplasmic reticulum and the Golgi complex. Forms a complex with HE and S proteins. Interacts with nucleocapsid N protein. This interaction probably participates in RNA packaging into the virus.

The protein resides in the virion membrane. Its subcellular location is the host Golgi apparatus membrane. Its function is as follows. Component of the viral envelope that plays a central role in virus morphogenesis and assembly via its interactions with other viral proteins. In Avian infectious bronchitis virus (strain Beaudette) (IBV), this protein is Membrane protein.